A 273-amino-acid polypeptide reads, in one-letter code: Ribosomal RNA small subunit methyltransferase A (273 aa).

The S-adenosyl-L-methionine site is built by Asn-18, Leu-20, Gly-45, Glu-66, Asp-91, and Asn-113.

It belongs to the class I-like SAM-binding methyltransferase superfamily. rRNA adenine N(6)-methyltransferase family. RsmA subfamily.

The protein resides in the cytoplasm. It catalyses the reaction adenosine(1518)/adenosine(1519) in 16S rRNA + 4 S-adenosyl-L-methionine = N(6)-dimethyladenosine(1518)/N(6)-dimethyladenosine(1519) in 16S rRNA + 4 S-adenosyl-L-homocysteine + 4 H(+). Functionally, specifically dimethylates two adjacent adenosines (A1518 and A1519) in the loop of a conserved hairpin near the 3'-end of 16S rRNA in the 30S particle. May play a critical role in biogenesis of 30S subunits. In Salmonella choleraesuis (strain SC-B67), this protein is Ribosomal RNA small subunit methyltransferase A.